The following is a 312-amino-acid chain: MAATGGRRCRRLEGETARAVLANVDTLLFDCDGVLWRGEAALSGAPAALGRLAAAGKRLCYVTNNSSRTRVAYTEKLRRLGFPPAEPRHVFGSAFCAARYLRQALPPGAAAYVLGGPALSAELEAAGIPHLGPGPAALPGPAPADWAQAPLEPAVRAVLVGFDEHFSYAKLCQALRYLLRGPDCLLVGTNRDNRLPLEGGSAIPGTGCLVKAVETAAEREALIVGKPSRYIFDCVASEFDIDPARTIMVGDRLDTDILMGNTCGLTTLLTLTGVSTLEEVRGHQESDCPARQGLVPDYYVDSIADLLPALED.

Catalysis depends on Asp30, which acts as the Nucleophile. 3 residues coordinate Mg(2+): Asp30, Asp32, and Asp251. Asp32 serves as the catalytic Proton donor.

The protein belongs to the HAD-like hydrolase superfamily. CbbY/CbbZ/Gph/YieH family. In terms of assembly, homodimer. Mg(2+) is required as a cofactor.

It catalyses the reaction O-phospho-L-tyrosyl-[protein] + H2O = L-tyrosyl-[protein] + phosphate. It carries out the reaction sn-glycerol 1-phosphate + H2O = glycerol + phosphate. The catalysed reaction is sn-glycerol 3-phosphate + H2O = glycerol + phosphate. Functionally, glycerol-3-phosphate phosphatase hydrolyzing glycerol-3-phosphate into glycerol. Thereby, regulates the cellular levels of glycerol-3-phosphate a metabolic intermediate of glucose, lipid and energy metabolism. Was also shown to have a 2-phosphoglycolate phosphatase activity and a tyrosine-protein phosphatase activity. However, their physiological relevance is unclear. In vitro, also has a phosphatase activity toward ADP, ATP, GDP and GTP. This Gallus gallus (Chicken) protein is Glycerol-3-phosphate phosphatase.